A 401-amino-acid polypeptide reads, in one-letter code: 8-amino-7-oxononanoate synthase (401 aa).

Residue Arg24 coordinates substrate. 111–112 provides a ligand contact to pyridoxal 5'-phosphate; it reads GF. His137 contributes to the substrate binding site. The pyridoxal 5'-phosphate site is built by Ser183, His211, and Thr240. Residue Lys243 is modified to N6-(pyridoxal phosphate)lysine. Thr357 serves as a coordination point for substrate.

Belongs to the class-II pyridoxal-phosphate-dependent aminotransferase family. BioF subfamily. As to quaternary structure, homodimer. Requires pyridoxal 5'-phosphate as cofactor.

The enzyme catalyses 6-carboxyhexanoyl-[ACP] + L-alanine + H(+) = (8S)-8-amino-7-oxononanoate + holo-[ACP] + CO2. The protein operates within cofactor biosynthesis; biotin biosynthesis. In terms of biological role, catalyzes the decarboxylative condensation of pimeloyl-[acyl-carrier protein] and L-alanine to produce 8-amino-7-oxononanoate (AON), [acyl-carrier protein], and carbon dioxide. In Xanthomonas campestris pv. campestris (strain B100), this protein is 8-amino-7-oxononanoate synthase.